Reading from the N-terminus, the 135-residue chain is Ribonuclease VapC5 (135 aa).

One can recognise a PINc domain in the interval 9 to 130 (VLDTSVFIAT…FAALDGAASV (122 aa)). 2 residues coordinate Mg(2+): D11 and D100.

This sequence belongs to the PINc/VapC protein family. As to quaternary structure, forms a complex with VapB5. Mg(2+) is required as a cofactor.

It localises to the secreted. Functionally, probable toxic component of a type II toxin-antitoxin (TA) system. The cognate antitoxin is VapB5. Has limited RNase activity on substrates; activity is seen with a VapC5-VapB5 complex. This chain is Ribonuclease VapC5, found in Mycobacterium tuberculosis (strain ATCC 25618 / H37Rv).